A 377-amino-acid polypeptide reads, in one-letter code: Chaperone protein DnaJ (377 aa).

The region spanning 6–70 (DYYKILGIDK…EKKAIYDKYG (65 aa)) is the J domain. A CR-type zinc finger spans residues 143–225 (GRVISQKLDK…CKGAKKIKES (83 aa)). Positions 156, 159, 173, 176, 199, 202, 213, and 216 each coordinate Zn(2+). CXXCXGXG motif repeat units follow at residues 156–163 (CESCNGTG), 173–180 (CSTCNGRG), 199–206 (CSTCNGLG), and 213–220 (CPSCKGAK).

Belongs to the DnaJ family. As to quaternary structure, homodimer. Requires Zn(2+) as cofactor.

Its subcellular location is the cytoplasm. In terms of biological role, participates actively in the response to hyperosmotic and heat shock by preventing the aggregation of stress-denatured proteins and by disaggregating proteins, also in an autonomous, DnaK-independent fashion. Unfolded proteins bind initially to DnaJ; upon interaction with the DnaJ-bound protein, DnaK hydrolyzes its bound ATP, resulting in the formation of a stable complex. GrpE releases ADP from DnaK; ATP binding to DnaK triggers the release of the substrate protein, thus completing the reaction cycle. Several rounds of ATP-dependent interactions between DnaJ, DnaK and GrpE are required for fully efficient folding. Also involved, together with DnaK and GrpE, in the DNA replication of plasmids through activation of initiation proteins. This chain is Chaperone protein DnaJ, found in Mycoplasmopsis pulmonis (strain UAB CTIP) (Mycoplasma pulmonis).